The sequence spans 518 residues: GMP synthase [glutamine-hydrolyzing] (518 aa).

In terms of domain architecture, Glutamine amidotransferase type-1 spans 11–203 (SILVLDFGSQ…AFDVCQAEAN (193 aa)). The Nucleophile role is filled by cysteine 88. Catalysis depends on residues histidine 177 and glutamate 179. The 190-residue stretch at 204-393 (WSMDDFIDMQ…LGMPSDLVWR (190 aa)) folds into the GMPS ATP-PPase domain. 231 to 237 (SGGVDSS) is a binding site for ATP.

In terms of assembly, homodimer.

The catalysed reaction is XMP + L-glutamine + ATP + H2O = GMP + L-glutamate + AMP + diphosphate + 2 H(+). It functions in the pathway purine metabolism; GMP biosynthesis; GMP from XMP (L-Gln route): step 1/1. Catalyzes the synthesis of GMP from XMP. The polypeptide is GMP synthase [glutamine-hydrolyzing] (Lactiplantibacillus plantarum (strain ATCC BAA-793 / NCIMB 8826 / WCFS1) (Lactobacillus plantarum)).